A 217-amino-acid polypeptide reads, in one-letter code: Acyl-homoserine-lactone synthase (217 aa).

This sequence belongs to the autoinducer synthase family.

It catalyses the reaction a fatty acyl-[ACP] + S-adenosyl-L-methionine = an N-acyl-L-homoserine lactone + S-methyl-5'-thioadenosine + holo-[ACP] + H(+). Its function is as follows. Required for the synthesis of OHHL (N-(3-oxohexanoyl)-L-homoserine lactone), an autoinducer molecule which binds to ExpR and thus acts in virulence (soft rot disease) through the activation of genes for plant tissue macerating enzymes. This Pectobacterium parmentieri protein is Acyl-homoserine-lactone synthase (expI).